A 386-amino-acid chain; its full sequence is MPFKGLVVQVADPQTLDKIIDKTLDTVGKSREQIFEISEQSRNEYVSLEQELQEVRMKVAEIIDQSDRAEVHARFARNRLAEVSKQFHRYSNEEIRKVYEQANELQVKLALLQQEEQQLRDRRDAIERRLLNLKDTIERAEELVGQMTVVYNFLTGDLRQVGEALEDAREKQAFGLQIIQAQEEERRKLSREIHDGPAQMMANVLLRSELVERIYHDKGIDEALKEIRDLRKMVKSSLAEVRRIIYDLRRMALDDLGLIPTLKKYVKTFEEHTGIFVDFKHIGKGERFPEHVEIALFRLVQEALQNTRKHAKASHVHVKIEEQKTKFTVVIKDNGKGFDQTEKKEGSFGLVGMKERVNMLKGQLVIRTKPNDGTTIIISIPITTEE.

The region spanning 188–384 (KLSREIHDGP…TIIISIPITT (197 aa)) is the Histidine kinase domain. A Phosphohistidine; by autocatalysis modification is found at His194.

Post-translationally, autophosphorylated.

It is found in the cytoplasm. The enzyme catalyses ATP + protein L-histidine = ADP + protein N-phospho-L-histidine.. Functionally, member of the two-component regulatory system DegS/DegU, which plays an important role in the transition growth phase. Acts as both a protein kinase that undergoes autophosphorylation and subsequently transfers the phosphate to DegU, and a protein phosphatase that dephosphorylates phospho-DegU. This chain is Signal transduction histidine-protein kinase/phosphatase DegS (degS), found in Brevibacillus brevis (Bacillus brevis).